A 28-amino-acid chain; its full sequence is uncharacterized protein (28 aa).

It is found in the cell inner membrane. This is an uncharacterized protein from Escherichia coli (strain K12).